The sequence spans 132 residues: Small ribosomal subunit protein uS8 (132 aa).

It belongs to the universal ribosomal protein uS8 family. In terms of assembly, part of the 30S ribosomal subunit. Contacts proteins S5 and S12.

In terms of biological role, one of the primary rRNA binding proteins, it binds directly to 16S rRNA central domain where it helps coordinate assembly of the platform of the 30S subunit. The chain is Small ribosomal subunit protein uS8 from Bifidobacterium animalis subsp. lactis (strain AD011).